The chain runs to 184 residues: MQARDPHVNVIFVGLMGAGKTTVGRAVARRLDRPFFDSDHEIEARTGARIPVIFELEGESGFRDREAQMIAELTQRENIVLATGGGAILRPENRKLLHERGLVVYLRANPHDLWLRTRKDKNRPLLQTDDPKAKLEALYEARDPLYRECAHFVIETGRPSVNGLVNMVLMQLEMAGIVAKPLQA.

17-22 (GAGKTT) contributes to the ATP binding site. T21 contacts Mg(2+). 3 residues coordinate substrate: D39, R63, and G85. R123 contacts ATP. Residue R142 participates in substrate binding.

This sequence belongs to the shikimate kinase family. In terms of assembly, monomer. It depends on Mg(2+) as a cofactor.

It is found in the cytoplasm. It catalyses the reaction shikimate + ATP = 3-phosphoshikimate + ADP + H(+). Its pathway is metabolic intermediate biosynthesis; chorismate biosynthesis; chorismate from D-erythrose 4-phosphate and phosphoenolpyruvate: step 5/7. Functionally, catalyzes the specific phosphorylation of the 3-hydroxyl group of shikimic acid using ATP as a cosubstrate. The chain is Shikimate kinase from Burkholderia thailandensis (strain ATCC 700388 / DSM 13276 / CCUG 48851 / CIP 106301 / E264).